Here is a 50-residue protein sequence, read N- to C-terminus: Photosystem II reaction center protein M (50 aa).

A helical membrane pass occupies residues 7–27 (GFVASLLFVGIPTIFLIGLFI).

The protein belongs to the PsbM family. As to quaternary structure, PSII is composed of 1 copy each of membrane proteins PsbA, PsbB, PsbC, PsbD, PsbE, PsbF, PsbH, PsbI, PsbJ, PsbK, PsbL, PsbM, PsbT, PsbX, PsbY, Psb30/Ycf12, peripheral proteins PsbO, CyanoQ (PsbQ), PsbU, PsbV and a large number of cofactors. It forms dimeric complexes.

It localises to the cellular thylakoid membrane. Functionally, one of the components of the core complex of photosystem II (PSII). PSII is a light-driven water:plastoquinone oxidoreductase that uses light energy to abstract electrons from H(2)O, generating O(2) and a proton gradient subsequently used for ATP formation. It consists of a core antenna complex that captures photons, and an electron transfer chain that converts photonic excitation into a charge separation. This subunit is found at the monomer-monomer interface. The polypeptide is Photosystem II reaction center protein M (Prochlorococcus marinus subsp. pastoris (strain CCMP1986 / NIES-2087 / MED4)).